Consider the following 307-residue polypeptide: ATP-dependent (S)-NAD(P)H-hydrate dehydratase (307 aa).

Residues 1-291 enclose the YjeF C-terminal domain; the sequence is MDHFLKLLPK…DEIPKLVRDV (291 aa). Residues Gly-96 and 150-156 each bind (6S)-NADPHX; that span reads NIVEFSR. ATP contacts are provided by residues 194 to 198 and 214 to 223; these read KGEVD and SSLRRCGGQG. Asp-224 contacts (6S)-NADPHX.

This sequence belongs to the NnrD/CARKD family. The cofactor is Mg(2+).

The enzyme catalyses (6S)-NADHX + ATP = ADP + phosphate + NADH + H(+). The catalysed reaction is (6S)-NADPHX + ATP = ADP + phosphate + NADPH + H(+). In terms of biological role, catalyzes the dehydration of the S-form of NAD(P)HX at the expense of ATP, which is converted to ADP. Together with NAD(P)HX epimerase, which catalyzes the epimerization of the S- and R-forms, the enzyme allows the repair of both epimers of NAD(P)HX, a damaged form of NAD(P)H that is a result of enzymatic or heat-dependent hydration. In Caenorhabditis briggsae, this protein is ATP-dependent (S)-NAD(P)H-hydrate dehydratase.